A 1326-amino-acid polypeptide reads, in one-letter code: MVGGSSAQKLTTNDALAYLKAVKDKFQDKRDKYDEFLEVMKDFKAQRVDTTGVILRVKELFKGNRELILGFNTFLPKGFEITLRPEDDQPAAPKKPVEFEEAISFVNKIKTRFQGDDRVYKSFLDILNMYRKENKSITEVYHEVAILFRDHHDLLGEFTHFLPDTSATASTNDSVKVPVRDRGIKSLPTMRQIDLDKKDRIITSHPNRALKTENMDVDHERSLLKDSKEEVRRIDKKNDFMDDRDRKDYRGLDHDSHKEHFFNSKKKLIRKDDDSAEMSDQAREGDKFSGAIPSSSTYDEKGHSQELAFVDRVKAKLDTADNQEFLRCLNLYSKEIISQPELQSLVSDLIGVYPDLMDAFKVFLAQCDKNDGLLSGIVSKKSLWSEGKCPQPTKSLDKDTDREREKIERYRERDREKERLEKVAASQKWAKPISELDLSNCEQCTPSYRRLPKNYPIPIASQKMEIGSQVLNDHWVSVTSGSEDYSFKHMRKNQYEESLFKCEDDRFELDMLLESVISATNRVEELLAKINSNELKTDTPICIEDHLTALNLRCIERLYSDHGLDVLDLLKKNAYLALPVILTRLKQKQEEWARCRTEFNKVWADIYTKNYHRSLDHRSFYFKQQDSKNLSTKALLAEIKEISEKKRGEDDALLALAAGNRRTISSNMSFDYPDPDLHEDLYQLIKYSCGEMCSTEQLDKVMKVWTEFLEPIFGVPSRPQGAEDREDAVKSTNHDREDQEDAVSPQNGASIANSMRSNGPRKVNESNQVRQASELDKDVTSSKTSDALLSCDNTQNDKMPKNLTTPDERAETKQAVSIERAHNSNALPLDGLLPQRNGKISSLSVAGLSNSNPKPALTSGTEELKPNYVNGPRVEIGDNPVIPNGTVAEWFAGEAKVEREEGELSPTGDFEEDNYAVHGENDMEALSKSKENDATADDASAPRSSDGSGNTSHNGDVSGTDSGDGEDCYREDDIDHNKVESEGEAEEGMSDGHDDTEGDMPVLSISVKNLLHVKPLAKYVPPALYDKDNDDSRKNSQVFYGNDSFYVLFRLHQILYDRILSAKINSSSPDRKWKTSNPTNPADSYARIMDALYNLLDGTSDNSKFEDDCRAIIGTQSYVLFTLDKLIYKLIKHLQAVAADEMDNKLQQLYAYEKSRKPEKFLDAVYYENALVLLPDEDIYRIECEQSTPSKLSIQLLDYGHDKPDVTSISMDPTFAAYLHNVFLSYQPNAKENPRIYLKRNKRKNGGDDELCTTDEVKIINGLECKITCSSSKVSYVLDTEDVLHRAKRRKLLNQSGLPLAHDSVCSGSLIRQRRTQRYQKLLTGQ.

PAH domains lie at 8-78, 95-165, and 292-367; these read QKLT…LPKG, KPVE…LPDT, and IPSS…LAQC. Disordered stretches follow at residues 272 to 299, 715 to 812, 844 to 864, and 927 to 1000; these read DDDS…STYD, VPSR…RAET, SVAG…TEEL, and SKSK…EGDM. The segment covering 721–737 has biased composition (basic and acidic residues); that stretch reads GAEDREDAVKSTNHDRE. Polar residues-rich tracts occupy residues 744 to 757, 781 to 805, 844 to 861, and 942 to 961; these read SPQN…SMRS, SSKT…NLTT, SVAG…TSGT, and PRSS…SGTD. Residues 967–981 are compositionally biased toward basic and acidic residues; it reads DCYREDDIDHNKVES.

It localises to the nucleus. In terms of biological role, acts as a transcriptional repressor. Plays roles in regulating gene expression and genome stability. The polypeptide is Paired amphipathic helix protein Sin3-like 4 (SNL4) (Arabidopsis thaliana (Mouse-ear cress)).